The following is a 385-amino-acid chain: Beta sliding clamp (385 aa).

This sequence belongs to the beta sliding clamp family. Forms a ring-shaped head-to-tail homodimer around DNA which binds and tethers DNA polymerases and other proteins to the DNA. The DNA replisome complex has a single clamp-loading complex (3 tau and 1 each of delta, delta', psi and chi subunits) which binds 3 Pol III cores (1 core on the leading strand and 2 on the lagging strand) each with a beta sliding clamp dimer. Additional proteins in the replisome are other copies of gamma, psi and chi, Ssb, DNA helicase and RNA primase.

The protein resides in the cytoplasm. In terms of biological role, confers DNA tethering and processivity to DNA polymerases and other proteins. Acts as a clamp, forming a ring around DNA (a reaction catalyzed by the clamp-loading complex) which diffuses in an ATP-independent manner freely and bidirectionally along dsDNA. Initially characterized for its ability to contact the catalytic subunit of DNA polymerase III (Pol III), a complex, multichain enzyme responsible for most of the replicative synthesis in bacteria; Pol III exhibits 3'-5' exonuclease proofreading activity. The beta chain is required for initiation of replication as well as for processivity of DNA replication. The sequence is that of Beta sliding clamp (dnaN) from Borreliella burgdorferi (strain ATCC 35210 / DSM 4680 / CIP 102532 / B31) (Borrelia burgdorferi).